The sequence spans 365 residues: Chorismate synthase (365 aa).

Arg-48 and Arg-54 together coordinate NADP(+). FMN is bound by residues 131 to 133 (RSS), 243 to 244 (NA), Gly-288, 303 to 307 (KPTSS), and Arg-329.

It belongs to the chorismate synthase family. As to quaternary structure, homotetramer. FMNH2 is required as a cofactor.

The catalysed reaction is 5-O-(1-carboxyvinyl)-3-phosphoshikimate = chorismate + phosphate. The protein operates within metabolic intermediate biosynthesis; chorismate biosynthesis; chorismate from D-erythrose 4-phosphate and phosphoenolpyruvate: step 7/7. Catalyzes the anti-1,4-elimination of the C-3 phosphate and the C-6 proR hydrogen from 5-enolpyruvylshikimate-3-phosphate (EPSP) to yield chorismate, which is the branch point compound that serves as the starting substrate for the three terminal pathways of aromatic amino acid biosynthesis. This reaction introduces a second double bond into the aromatic ring system. In Sinorhizobium fredii (strain NBRC 101917 / NGR234), this protein is Chorismate synthase.